Here is a 140-residue protein sequence, read N- to C-terminus: MPLPEPSEQEGESVKASQEPSPKPGTEVIPAAPRKPRKFSKLVLLTASKDSTKVAGAKRKGVHCVMSLGVPGPATLAKALLQTHPEAQRAIEAAPQEPEQKRSRQDPGTDRTEDSGLAAGPPEAAGENFAPCSVAPGKSL.

Disordered regions lie at residues 1–39 and 84–140; these read MPLPEPSEQEGESVKASQEPSPKPGTEVIPAAPRKPRKF and HPEA…GKSL. Ser-21 is modified (phosphoserine). Basic and acidic residues predominate over residues 98 to 114; that stretch reads PEQKRSRQDPGTDRTED. Over residues 118–127 the composition is skewed to low complexity; it reads AAGPPEAAGE.

The sequence is that of FLYWCH family member 2 (FLYWCH2) from Homo sapiens (Human).